Here is a 582-residue protein sequence, read N- to C-terminus: Frizzled-10 (582 aa).

An N-terminal signal peptide occupies residues 1–21; it reads MQHPGPRLWLVLQVMIGSCTA. Topologically, residues 22–226 are extracellular; the sequence is ISSMDLERPG…DVYWSRDDKR (205 aa). Positions 30 to 151 constitute an FZ domain; it reads PGDGKCQPVE…NDPNYLCMEA (122 aa). Intrachain disulfides connect Cys-35–Cys-96, Cys-43–Cys-89, Cys-80–Cys-118, Cys-107–Cys-148, and Cys-111–Cys-135. Asn-49 is a glycosylation site (N-linked (GlcNAc...) asparagine). The disordered stretch occupies residues 153 to 189; it reads NNGSDEPSRGSGMFPPLFRPQRPHSAQEHPLKDGGPG. N-linked (GlcNAc...) asparagine glycosylation is present at Asn-154. Residues 227–247 traverse the membrane as a helical segment; sequence FAVVWLAIWSVLCFFSSAFTV. The Cytoplasmic segment spans residues 248-263; that stretch reads LTFLIDPSRFRYPERP. The helical transmembrane segment at 264–284 threads the bilayer; it reads IIFLSMCYCVYSVGYIIRLFA. The Extracellular segment spans residues 285–312; sequence GAESIACDRDSGQLYVIQEGLESTGCTL. A helical transmembrane segment spans residues 313–333; sequence VFLVLYYFGMASSLWWVVLTL. Residues 334-352 lie on the Cytoplasmic side of the membrane; it reads TWFLAAGKKWGHEAIEANS. The helical transmembrane segment at 353-373 threads the bilayer; it reads SYFHLAAWAIPAVKTILILVM. The Extracellular portion of the chain corresponds to 374 to 394; the sequence is RRVAGDELTGVCYVGSMDVNA. Residues 395 to 415 traverse the membrane as a helical segment; sequence LTGFVLVPLACYLVIGTSFIL. Over 416–444 the chain is Cytoplasmic; the sequence is SGFVALFHIRRVMKTGGENTDKLEKLMVR. The helical transmembrane segment at 445 to 465 threads the bilayer; sequence IGVFSLLYTVPATCVIACYFY. The Extracellular segment spans residues 466–503; sequence ERLNMDYWKMLATQHKCKMNNQTKTPDCLMTTSIPAVE. The N-linked (GlcNAc...) asparagine glycan is linked to Asn-486. Residues 504–524 traverse the membrane as a helical segment; that stretch reads VFMVKVSMLLVVGITSGVWVW. The Cytoplasmic segment spans residues 525-582; sequence TSKTLQSWQHVCSRGLKRKSRRKPASVVTSAGIYKKAQHPQKPHLGKYELPAQPSACV. A Lys-Thr-X-X-X-Trp motif, mediates interaction with the PDZ domain of Dvl family members motif is present at residues 527 to 532; the sequence is KTLQSW. The interval 561 to 582 is disordered; it reads AQHPQKPHLGKYELPAQPSACV. The PDZ-binding signature appears at 580 to 582; the sequence is ACV.

It belongs to the G-protein coupled receptor Fz/Smo family. Interacts with MYOC. Interacts with WNT7B. Post-translationally, ubiquitinated by ZNRF3, leading to its degradation by the proteasome.

It localises to the cell membrane. In terms of biological role, receptor for Wnt proteins. Functions in the canonical Wnt/beta-catenin signaling pathway. The canonical Wnt/beta-catenin signaling pathway leads to the activation of disheveled proteins, inhibition of GSK-3 kinase, nuclear accumulation of beta-catenin and activation of Wnt target genes. A second signaling pathway involving PKC and calcium fluxes has been seen for some family members, but it is not yet clear if it represents a distinct pathway or if it can be integrated in the canonical pathway, as PKC seems to be required for Wnt-mediated inactivation of GSK-3 kinase. Both pathways seem to involve interactions with G-proteins. May be involved in transduction and intercellular transmission of polarity information during tissue morphogenesis and/or in differentiated tissues. This Mus musculus (Mouse) protein is Frizzled-10 (Fzd10).